Consider the following 827-residue polypeptide: SID1 transmembrane family member 1 (827 aa).

A signal peptide spans 1-19 (MRGCLRLALLCALPWLLLA). At 20–309 (ASPGHPAKSP…SIKESVYVKS (290 aa)) the chain is on the extracellular side. 5 N-linked (GlcNAc...) asparagine glycosylation sites follow: asparagine 57, asparagine 67, asparagine 83, asparagine 136, and asparagine 282. A helical membrane pass occupies residues 310-330 (SLFSVFIFLSFYLGCLLVGFV). Residues 331 to 442 (HYLRFQRKSI…DRRIVSKKYK (112 aa)) lie on the Cytoplasmic side of the membrane. The interval 355–408 (ASHPIAASTPEGSNYGTIDESSSSPGRQMSSSDGGPPGQSDTDSSVEESDFDTM) is disordered. Residues 364-374 (PEGSNYGTIDE) show a composition bias toward polar residues. Residues 375–397 (SSSSPGRQMSSSDGGPPGQSDTD) are compositionally biased toward low complexity. Residues 398–408 (SSVEESDFDTM) show a composition bias toward acidic residues. Residues 443–463 (IYFWNIITIAVFYALPVIQLV) form a helical membrane-spanning segment. At 464 to 494 (ITYQTVVNVTGNQDICYYNFLCAHPLGVLSA) the chain is on the extracellular side. A glycan (N-linked (GlcNAc...) asparagine) is linked at asparagine 471. A helical membrane pass occupies residues 495 to 515 (FNNILSNLGHVLLGFLFLLIV). The Cytoplasmic segment spans residues 516–541 (LRRDILHRRALEAKDIFAVEYGIPKH). A helical membrane pass occupies residues 542–562 (FGLFYAMGIALMMEGVLSACY). The Extracellular segment spans residues 563-572 (HVCPNYSNFQ). The N-linked (GlcNAc...) asparagine glycan is linked to asparagine 567. The helical transmembrane segment at 573 to 590 (FDTSFMYMIAGLCMLKLY) threads the bilayer. Topologically, residues 591–600 (QTRHPDINAS) are cytoplasmic. The helical transmembrane segment at 601 to 621 (AYSAYASFAVVIMVTVLGVVF) threads the bilayer. Topologically, residues 622-626 (GKNDV) are extracellular. Residues 627–647 (WFWVIFSAIHVLASLALSTQI) traverse the membrane as a helical segment. Residues 648-683 (YYMGRFKIDLGIFRRAAMVFYTDCIQQCSRPLYMDR) are Cytoplasmic-facing. A helical transmembrane segment spans residues 684-704 (MVLLVVGNLVNWSFALFGLIY). Residues 705–710 (RPRDFA) are Extracellular-facing. A helical transmembrane segment spans residues 711 to 731 (SYMLGIFICNLLLYLAFYIIM). Residues 732 to 741 (KLRSSEKVLP) are Cytoplasmic-facing. The chain crosses the membrane as a helical span at residues 742–762 (VPLFCIVATAVMWAAALYFFF). At 763-791 (QNLSSWEGTPAESREKNRECILLDFFDDH) the chain is on the extracellular side. N-linked (GlcNAc...) asparagine glycosylation is present at asparagine 764. The chain crosses the membrane as a helical span at residues 792–812 (DIWHFLSATALFFSFLVLLTL). The Cytoplasmic portion of the chain corresponds to 813–827 (DDDLDVVRRDQIPVF).

It belongs to the SID1 family.

The protein localises to the membrane. Functionally, in vitro binds long double-stranded RNA (dsRNA) (500 and 700 base pairs), but not dsRNA shorter than 300 bp. Not involved in RNA autophagy, a process in which RNA is directly imported into lysosomes in an ATP-dependent manner, and degraded. This Homo sapiens (Human) protein is SID1 transmembrane family member 1 (SIDT1).